A 101-amino-acid chain; its full sequence is Small ribosomal subunit protein bS18c (101 aa).

Over residues 1 to 19 the composition is skewed to basic residues; that stretch reads MDKSKQLFRKSKRSFRRRL. The interval 1-23 is disordered; that stretch reads MDKSKQLFRKSKRSFRRRLPPIG.

Belongs to the bacterial ribosomal protein bS18 family. As to quaternary structure, part of the 30S ribosomal subunit.

Its subcellular location is the plastid. It is found in the chloroplast. In Acorus calamus (Sweet flag), this protein is Small ribosomal subunit protein bS18c.